Reading from the N-terminus, the 113-residue chain is uncharacterized protein (113 aa).

This is an uncharacterized protein from Ureaplasma parvum serovar 3 (strain ATCC 700970).